Reading from the N-terminus, the 424-residue chain is Glutamyl-tRNA reductase (424 aa).

Substrate is bound by residues 49-52, Ser-105, 110-112, and Gln-116; these read TCNR and EPQ. Residue Cys-50 is the Nucleophile of the active site. NADP(+) is bound at residue 185 to 190; that stretch reads GSGETA.

The protein belongs to the glutamyl-tRNA reductase family. Homodimer.

The catalysed reaction is (S)-4-amino-5-oxopentanoate + tRNA(Glu) + NADP(+) = L-glutamyl-tRNA(Glu) + NADPH + H(+). It functions in the pathway porphyrin-containing compound metabolism; protoporphyrin-IX biosynthesis; 5-aminolevulinate from L-glutamyl-tRNA(Glu): step 1/2. In terms of biological role, catalyzes the NADPH-dependent reduction of glutamyl-tRNA(Glu) to glutamate 1-semialdehyde (GSA). The protein is Glutamyl-tRNA reductase of Legionella pneumophila (strain Lens).